The sequence spans 347 residues: CDK2-associated and cullin domain-containing protein 1 (347 aa).

Positions 1-11 (MEESMEEEEML) are enriched in acidic residues. Disordered stretches follow at residues 1 to 63 (MEES…LPGG) and 320 to 347 (RGDQSRKRAGDELAYNSPSACASSRGYR). The span at 34–49 (QPPPAPPLPPPPPPRP) shows a compositional bias: pro residues.

The protein belongs to the cullin family. Interacts with CDK2.

In terms of biological role, cell cycle associated protein capable of promoting cell proliferation through the activation of CDK2 at the G1/S phase transition. This Rattus norvegicus (Rat) protein is CDK2-associated and cullin domain-containing protein 1 (Cacul1).